The sequence spans 340 residues: Thylakoidal processing peptidase 1, chloroplastic (340 aa).

A chloroplast-targeting transit peptide spans 1 to 52; the sequence is MAIRITFTYSTHVARNLVGTRVGPGGYCFESLVRPRFFSHKRDFDRSPRNRP. A helical transmembrane segment spans residues 155 to 175; sequence EDAKAAFTAVTVSILFRSALA. Residues 176–340 lie on the Lumenal, thylakoid side of the membrane; it reads EPKSIPSTSM…AITRGPVAVS (165 aa). The active site involves serine 184.

It belongs to the peptidase S26 family.

The protein localises to the plastid. It is found in the chloroplast thylakoid membrane. It catalyses the reaction Cleavage of hydrophobic, N-terminal signal or leader sequences from secreted and periplasmic proteins.. Cleaves the thylakoid-transfer domain from a chloroplast protein. This is Thylakoidal processing peptidase 1, chloroplastic (TPP1) from Arabidopsis thaliana (Mouse-ear cress).